The following is a 273-amino-acid chain: Undecaprenyl-diphosphatase (273 aa).

Helical transmembrane passes span Ser39–Phe59, Leu86–Thr106, Leu117–Gly137, Val146–Val166, Phe189–Leu209, Leu220–Leu240, and Ile249–Thr269.

The protein belongs to the UppP family.

It is found in the cell inner membrane. The enzyme catalyses di-trans,octa-cis-undecaprenyl diphosphate + H2O = di-trans,octa-cis-undecaprenyl phosphate + phosphate + H(+). Functionally, catalyzes the dephosphorylation of undecaprenyl diphosphate (UPP). Confers resistance to bacitracin. The chain is Undecaprenyl-diphosphatase from Pelobacter propionicus (strain DSM 2379 / NBRC 103807 / OttBd1).